A 460-amino-acid polypeptide reads, in one-letter code: MFS-type transporter PUL3 (460 aa).

A run of 8 helical transmembrane segments spans residues 16–36, 50–70, 81–101, 113–133, 151–171, 181–201, 240–260, and 271–291; these read AVTL…SSVV, YLFI…FIIG, WVII…SCAG, IICG…TAIS, GICM…DFTV, APTF…MFVL, MFLS…FLTL, and VAFM…PDLV. Residues 300 to 323 form a disordered region; the sequence is PSTQDETDTSDNDKIEKEESEQKS. Residues 310 to 323 show a composition bias toward basic and acidic residues; the sequence is DNDKIEKEESEQKS. The next 4 helical transmembrane spans lie at 333–353, 369–389, 408–428, and 433–453; these read VSLT…MIGA, IFFT…GSSV, FIGA…AALY, and GLPI…PSLV.

This sequence belongs to the major facilitator superfamily. TCR/Tet family.

The protein localises to the cell membrane. MFS-type transporer required for the uptake of iron via the uptake of the siderophore pulcherrimin-iron complex. The sequence is that of MFS-type transporter PUL3 from Kluyveromyces lactis (strain ATCC 8585 / CBS 2359 / DSM 70799 / NBRC 1267 / NRRL Y-1140 / WM37) (Yeast).